Reading from the N-terminus, the 191-residue chain is 3-isopropylmalate dehydratase small subunit (191 aa).

Belongs to the LeuD family. LeuD type 1 subfamily. Heterodimer of LeuC and LeuD.

The catalysed reaction is (2R,3S)-3-isopropylmalate = (2S)-2-isopropylmalate. The protein operates within amino-acid biosynthesis; L-leucine biosynthesis; L-leucine from 3-methyl-2-oxobutanoate: step 2/4. In terms of biological role, catalyzes the isomerization between 2-isopropylmalate and 3-isopropylmalate, via the formation of 2-isopropylmaleate. The protein is 3-isopropylmalate dehydratase small subunit of Lactococcus lactis subsp. cremoris (strain MG1363).